The sequence spans 468 residues: Glucose-dependent insulinotropic receptor (468 aa).

Residues 1–6 lie on the Extracellular side of the membrane; sequence MESSFS. The chain crosses the membrane as a helical span at residues 7–27; it reads FGVILAVLTILIIAVNALVVV. The Cytoplasmic segment spans residues 28–37; sequence AMLLSIYKND. The helical transmembrane segment at 38–58 threads the bilayer; it reads GVGLCFTLNLAVADTLIGVAI. The Extracellular portion of the chain corresponds to 59-81; sequence SGLVTDQLSSSAQHTQKTLCSLR. The chain crosses the membrane as a helical span at residues 82 to 102; the sequence is MAFVTSSAAASVLTVMLIAFD. Topologically, residues 103-125 are cytoplasmic; that stretch reads RYLAIKQPLRYFQIMNGLVAGGC. The chain crosses the membrane as a helical span at residues 126 to 146; sequence IAGLWLISYLIGFLPLGVSIF. The Extracellular portion of the chain corresponds to 147–164; it reads QQTTYHGPCTFFAVFHPR. Residues 165–185 form a helical membrane-spanning segment; it reads FVLTLSCAGFFPAVLLFVFFY. Residues 186–226 lie on the Cytoplasmic side of the membrane; that stretch reads CDMLKIASVHSQHIRKMEHAGAMVGACRPPRPVNDFKAVRT. Residues 227–247 traverse the membrane as a helical segment; sequence VSVLIGSFTLSWSPFLITSIV. At 248 to 262 the chain is on the extracellular side; that stretch reads QVACHKCCLYQVLEK. Residues 263-283 form a helical membrane-spanning segment; the sequence is YLWLLGVGNSLLNPLIYAYWQ. At 284 to 468 the chain is on the cytoplasmic side; it reads REVRQQLCHM…MSDPLRTCRG (185 aa).

The protein belongs to the G-protein coupled receptor 1 family. Expression restricted to the beta-cells of pancreatic islets.

The protein localises to the cell membrane. Functionally, receptor for the endogenous fatty-acid ethanolamide oleoylethanolamide (OEA) and lysophosphatidylcholine (LPC). Functions as a glucose-dependent insulinotropic receptor. The activity of this receptor is mediated by G proteins which activate adenylate cyclase. Seems to act through a G(s) mediated pathway. The polypeptide is Glucose-dependent insulinotropic receptor (Gpr119) (Rattus norvegicus (Rat)).